Reading from the N-terminus, the 149-residue chain is D-aminoacyl-tRNA deacylase (149 aa).

The short motif at 137 to 138 is the Gly-cisPro motif, important for rejection of L-amino acids element; that stretch reads GP.

Belongs to the DTD family. In terms of assembly, homodimer.

The protein resides in the cytoplasm. The enzyme catalyses glycyl-tRNA(Ala) + H2O = tRNA(Ala) + glycine + H(+). It catalyses the reaction a D-aminoacyl-tRNA + H2O = a tRNA + a D-alpha-amino acid + H(+). An aminoacyl-tRNA editing enzyme that deacylates mischarged D-aminoacyl-tRNAs. Also deacylates mischarged glycyl-tRNA(Ala), protecting cells against glycine mischarging by AlaRS. Acts via tRNA-based rather than protein-based catalysis; rejects L-amino acids rather than detecting D-amino acids in the active site. By recycling D-aminoacyl-tRNA to D-amino acids and free tRNA molecules, this enzyme counteracts the toxicity associated with the formation of D-aminoacyl-tRNA entities in vivo and helps enforce protein L-homochirality. In Leuconostoc mesenteroides subsp. mesenteroides (strain ATCC 8293 / DSM 20343 / BCRC 11652 / CCM 1803 / JCM 6124 / NCDO 523 / NBRC 100496 / NCIMB 8023 / NCTC 12954 / NRRL B-1118 / 37Y), this protein is D-aminoacyl-tRNA deacylase.